Here is a 232-residue protein sequence, read N- to C-terminus: GFP-like non-fluorescent chromoprotein FP595 (232 aa).

The 2-iminomethyl-5-imidazolinone (Met-Gly) cross-link spans 63–65 (MYG). The residue at position 64 (Y64) is a (E)-2,3-didehydrotyrosine.

It belongs to the GFP family. Contains a chromophore consisting of modified amino acid residues. The chromophore is formed by autocatalytic backbone condensation between Xaa-N and Gly-(N+2), oxidation of Tyr-(N+1) to didehydrotyrosine, and formation of a double bond to the alpha-amino nitrogen of residue Tyr-(N+1). Maturation of the chromophore requires nothing other than molecular oxygen. In terms of tissue distribution, tentacle tips.

In terms of biological role, pigment protein that is intensely purple in color. The protein is GFP-like non-fluorescent chromoprotein FP595 of Anemonia sulcata (Mediterranean snakelocks sea anemone).